A 50-amino-acid chain; its full sequence is U37-theraphotoxin-Cg1a (50 aa).

Positions 1-19 (MRVLLIIAGLALLSVVCYT) are cleaved as a signal peptide.

This sequence belongs to the neurotoxin 10 (Hwtx-1) family. 67 (Jztx-67) subfamily. Expressed by the venom gland.

It localises to the secreted. The polypeptide is U37-theraphotoxin-Cg1a (Chilobrachys guangxiensis (Chinese earth tiger tarantula)).